Consider the following 316-residue polypeptide: Acetaldehyde dehydrogenase (316 aa).

Ser-11 to Ile-14 lines the NAD(+) pocket. Catalysis depends on Cys-131, which acts as the Acyl-thioester intermediate. Residues Ser-162–Asn-170 and Asn-289 each bind NAD(+).

This sequence belongs to the acetaldehyde dehydrogenase family. Interacts with MhpE.

It catalyses the reaction acetaldehyde + NAD(+) + CoA = acetyl-CoA + NADH + H(+). The protein operates within aromatic compound metabolism; 3-phenylpropanoate degradation. Catalyzes the conversion of acetaldehyde to acetyl-CoA, using NAD(+) and coenzyme A. Is the final enzyme in the meta-cleavage pathway for the degradation of aromatic compounds. The chain is Acetaldehyde dehydrogenase from Escherichia coli O157:H7.